Here is a 352-residue protein sequence, read N- to C-terminus: C-C chemokine receptor type 5 (352 aa).

The Extracellular portion of the chain corresponds to 1–30 (MDYQVSSPTYDIDYYTSEPCQKVNVKQIAA). Sulfotyrosine is present on Y3. O-linked (GalNAc...) serine glycans are attached at residues S6 and S7. Sulfotyrosine is present on residues Y10, Y14, and Y15. Cystine bridges form between C20-C269 and C101-C178. A helical transmembrane segment spans residues 31–58 (RLLPPLYSLVFIFGFVGNILVVLILINC). At 59-68 (KRLKSMTDIY) the chain is on the cytoplasmic side. The helical transmembrane segment at 69–89 (LLNLAISDLFFLLTVPFWAHY) threads the bilayer. The Extracellular portion of the chain corresponds to 90–102 (AAAQWDFGNTMCQ). The helical transmembrane segment at 103–124 (LLTGLYFIGFFSGIFFIILLTI) threads the bilayer. Residues 125–141 (DRYLAIVHAVFALKART) lie on the Cytoplasmic side of the membrane. The chain crosses the membrane as a helical span at residues 142-166 (VTFGVVTSVITWVVAVFASLPGIIF). The Extracellular segment spans residues 167-198 (TRSQREGVHYTCSSHFPYSQYQFWKNFQTLKI). The chain crosses the membrane as a helical span at residues 199–218 (VILGLVLPLLVMVICYSGIL). Residues 219–235 (KTLLRCRNEKKRHRAVR) lie on the Cytoplasmic side of the membrane. A helical membrane pass occupies residues 236 to 260 (LIFTIMIVYFLFWAPYNIVLLLNTF). The Extracellular portion of the chain corresponds to 261-277 (QEFFGLNNCSSSNRLDQ). The helical transmembrane segment at 278–301 (AMQVTETLGMTHCCINPIIYAFVG) threads the bilayer. Residues 302–352 (EKFRNYLLVFFQKHIAKRFCKCCSIFQQEAPERASSVYTRSTGEQETSVGL) lie on the Cytoplasmic side of the membrane. S-palmitoyl cysteine attachment occurs at residues C321, C323, and C324. S336, S337, S342, and S349 each carry phosphoserine; by BARK1.

Belongs to the G-protein coupled receptor 1 family. In terms of assembly, interacts with PRAF2. Efficient ligand binding to CCL3/MIP-1alpha and CCL4/MIP-1beta requires sulfation, O-glycosylation and sialic acid modifications. Glycosylation on Ser-6 is required for efficient binding of CCL4. Interacts with GRK2. Interacts with ARRB1 and ARRB2. Interacts with CNIH4. Interacts with S100A4; this interaction stimulates T-lymphocyte chemotaxis. Post-translationally, sulfated on at least 2 of the N-terminal tyrosines. Sulfation is required for efficient binding of the chemokines, CCL3 and CCL4. In terms of processing, palmitoylation in the C-terminal is important for cell surface expression. Phosphorylation on serine residues in the C-terminal is stimulated by binding CC chemokines especially by APO-RANTES. Post-translationally, O-glycosylated, but not N-glycosylated. Ser-6 appears to be the major site even if Ser-7 may be also O-glycosylated. Also sialylated glycans present which contribute to chemokine binding. Thr-16 and Ser-17 may also be glycosylated and, if so, with small moieties such as a T-antigen.

The protein resides in the cell membrane. Its function is as follows. Receptor for a number of inflammatory CC-chemokines including CCL3/MIP-1-alpha, CCL4/MIP-1-beta and RANTES and subsequently transduces a signal by increasing the intracellular calcium ion level. May play a role in the control of granulocytic lineage proliferation or differentiation. Participates in T-lymphocyte migration to the infection site by acting as a chemotactic receptor. The chain is C-C chemokine receptor type 5 (CCR5) from Rhinopithecus avunculus (Tonkin snub-nosed monkey).